A 145-amino-acid polypeptide reads, in one-letter code: MKGNYLVIDKRVLPDVYEKVVFAQKLLKDGKVKEITEATKIAGISRSVYYKYKDYIFDFAETSQGKKVTFNLIVKDQTGVLSGIINYISEQGGNILTINQGIPLNGVANISVTIDMSTLIGDIKTLLNGLSDIQYVEKIEFVAME.

Residues Thr69–Met144 enclose the ACT domain.

The protein belongs to the UPF0735 family.

The sequence is that of UPF0735 ACT domain-containing protein CLL_A2896 from Clostridium botulinum (strain Eklund 17B / Type B).